Reading from the N-terminus, the 422-residue chain is Histidine--tRNA ligase (422 aa).

The protein belongs to the class-II aminoacyl-tRNA synthetase family. In terms of assembly, homodimer.

The protein resides in the cytoplasm. It catalyses the reaction tRNA(His) + L-histidine + ATP = L-histidyl-tRNA(His) + AMP + diphosphate + H(+). The protein is Histidine--tRNA ligase of Lysinibacillus sphaericus (strain C3-41).